A 444-amino-acid polypeptide reads, in one-letter code: Homogentisate 1,2-dioxygenase (444 aa).

The active-site Proton acceptor is the His-298. Residues His-341 and Glu-347 each coordinate Fe cation. Positions 356 and 377 each coordinate homogentisate. His-377 contacts Fe cation.

The protein belongs to the homogentisate dioxygenase family. Hexamer; dimer of trimers. Requires Fe cation as cofactor.

It catalyses the reaction homogentisate + O2 = 4-maleylacetoacetate + H(+). It functions in the pathway amino-acid degradation; L-phenylalanine degradation; acetoacetate and fumarate from L-phenylalanine: step 4/6. Involved in the catabolism of homogentisate (2,5-dihydroxyphenylacetate or 2,5-OH-PhAc), a central intermediate in the degradation of phenylalanine and tyrosine. Catalyzes the oxidative ring cleavage of the aromatic ring of homogentisate to yield maleylacetoacetate. The chain is Homogentisate 1,2-dioxygenase from Burkholderia ambifaria (strain MC40-6).